Here is a 196-residue protein sequence, read N- to C-terminus: uncharacterized protein (196 aa).

This is an uncharacterized protein from Saccharolobus islandicus (Sulfolobus islandicus).